The following is an 86-amino-acid chain: Small ribosomal subunit protein uS15 (86 aa).

It belongs to the universal ribosomal protein uS15 family. Part of the 30S ribosomal subunit. Forms a bridge to the 50S subunit in the 70S ribosome, contacting the 23S rRNA.

One of the primary rRNA binding proteins, it binds directly to 16S rRNA where it helps nucleate assembly of the platform of the 30S subunit by binding and bridging several RNA helices of the 16S rRNA. In terms of biological role, forms an intersubunit bridge (bridge B4) with the 23S rRNA of the 50S subunit in the ribosome. This Mycoplasma pneumoniae (strain ATCC 29342 / M129 / Subtype 1) (Mycoplasmoides pneumoniae) protein is Small ribosomal subunit protein uS15.